A 273-amino-acid chain; its full sequence is Large ribosomal subunit protein uL2 (273 aa).

Disordered stretches follow at residues 28 to 53 (KPFA…TTRH) and 221 to 273 (RGTA…RRTK). Over residues 39–48 (KSGGRNNNGR) the composition is skewed to low complexity.

The protein belongs to the universal ribosomal protein uL2 family. As to quaternary structure, part of the 50S ribosomal subunit. Forms a bridge to the 30S subunit in the 70S ribosome.

Functionally, one of the primary rRNA binding proteins. Required for association of the 30S and 50S subunits to form the 70S ribosome, for tRNA binding and peptide bond formation. It has been suggested to have peptidyltransferase activity; this is somewhat controversial. Makes several contacts with the 16S rRNA in the 70S ribosome. The protein is Large ribosomal subunit protein uL2 of Pectobacterium atrosepticum (strain SCRI 1043 / ATCC BAA-672) (Erwinia carotovora subsp. atroseptica).